The following is a 34-amino-acid chain: MEVNILAFIATALFILIPTAFLLIIYVKTVSQND.

Residues Ile-5 to Ile-25 traverse the membrane as a helical segment.

This sequence belongs to the PsbM family. As to quaternary structure, PSII is composed of 1 copy each of membrane proteins PsbA, PsbB, PsbC, PsbD, PsbE, PsbF, PsbH, PsbI, PsbJ, PsbK, PsbL, PsbM, PsbT, PsbX, PsbY, PsbZ, Psb30/Ycf12, at least 3 peripheral proteins of the oxygen-evolving complex and a large number of cofactors. It forms dimeric complexes.

The protein localises to the plastid. It localises to the chloroplast thylakoid membrane. Its function is as follows. One of the components of the core complex of photosystem II (PSII). PSII is a light-driven water:plastoquinone oxidoreductase that uses light energy to abstract electrons from H(2)O, generating O(2) and a proton gradient subsequently used for ATP formation. It consists of a core antenna complex that captures photons, and an electron transfer chain that converts photonic excitation into a charge separation. This subunit is found at the monomer-monomer interface. The polypeptide is Photosystem II reaction center protein M (Lolium perenne (Perennial ryegrass)).